Here is a 470-residue protein sequence, read N- to C-terminus: ATP synthase subunit beta (470 aa).

155-162 contacts ATP; sequence GGAGVGKT.

This sequence belongs to the ATPase alpha/beta chains family. F-type ATPases have 2 components, CF(1) - the catalytic core - and CF(0) - the membrane proton channel. CF(1) has five subunits: alpha(3), beta(3), gamma(1), delta(1), epsilon(1). CF(0) has three main subunits: a(1), b(2) and c(9-12). The alpha and beta chains form an alternating ring which encloses part of the gamma chain. CF(1) is attached to CF(0) by a central stalk formed by the gamma and epsilon chains, while a peripheral stalk is formed by the delta and b chains.

The protein localises to the cell membrane. It carries out the reaction ATP + H2O + 4 H(+)(in) = ADP + phosphate + 5 H(+)(out). Functionally, produces ATP from ADP in the presence of a proton gradient across the membrane. The catalytic sites are hosted primarily by the beta subunits. This chain is ATP synthase subunit beta, found in Staphylococcus saprophyticus subsp. saprophyticus (strain ATCC 15305 / DSM 20229 / NCIMB 8711 / NCTC 7292 / S-41).